The primary structure comprises 619 residues: Interferon-activable protein 204 (619 aa).

The Pyrin domain occupies 1 to 88; it reads MVNEYKRIVL…AEILKKERSE (88 aa). The Nuclear export signal signature appears at 24-35; that stretch reads LFKSLLARDLNL. The span at 86–99 shows a compositional bias: basic and acidic residues; that stretch reads RSEVTGETSLEKNG. The segment at 86-223 is disordered; it reads RSEVTGETSL…QNQNIPRGAV (138 aa). Positions 122-153 are enriched in low complexity; that stretch reads TSATQEETSTAQAGTSTAQARTSTAQAGTSTA. A run of 3 repeats spans residues 134–140, 141–147, and 148–154. Positions 134 to 154 are 3 X 7 AA tandem repeats of A-[GR]-T-S-T-A-Q; that stretch reads AGTSTAQARTSTAQAGTSTAQ. A Nuclear localization signal motif is present at residues 150-157; it reads TSTAQKRK. The segment covering 159-176 has biased composition (basic and acidic residues); sequence MREEETGVKKSKAAKEPD. A compositionally biased stretch (low complexity) spans 190 to 206; it reads SPILHSSSSASSNIPSA. The span at 207 to 218 shows a compositional bias: polar residues; sequence KNQKSQPQNQNI. HIN-200 domains are found at residues 213–413 and 417–615; these read PQNQ…IKIS and NVPK…MQVI. The interaction with ID2 stretch occupies residues 550-614; sequence KKTERNKFIY…RSVRHSYMQV (65 aa).

This sequence belongs to the HIN-200 family. Interacts with UBTF. Interacts with RUNX2. Interacts with ID1, ID2 and ID3. Interacts with STING. Post-translationally, acetylated upon bacterial infection, leading to translocation from nucleus to cytoplasm and subsequent recruitment of STING to activate IFN-beta production. In terms of tissue distribution, present in osteoblasts (at protein level).

It localises to the nucleus. The protein localises to the nucleolus. The protein resides in the cytoplasm. Functionally, interferon-stimulated protein that plays a role in several biological processes including cell differentiation, autophagy and innate immunity. Cooperates with CGAS to sense dsDNA and activates the STING-dependent type I IFN pathway. Mechanistically, gets acetylated upon bacterial infection and then translocates from nucleus into cytoplasm to recruit STING for activation of TBK1-dependent IRF3 nuclear translocation and IFN-beta release. Inhibits the transcription of ribosomal RNA. May inhibit DNA binding by UBTF. Inhibits cell growth via p53/TP53 and RB1-dependent and independent pathways. Acts as a coactivator of RUNX2 during osteogenesis. May be involved in macrophage differentiation. Enables skeletal muscle and cardiac myocyte differentiation by sequestring Id proteins in the cytosol and promoting their ubiquitination and subsequent degradation. The polypeptide is Interferon-activable protein 204 (Ifi204) (Mus musculus (Mouse)).